A 475-amino-acid chain; its full sequence is Cytochrome c-552 (475 aa).

The N-terminal stretch at 1-29 is a signal peptide; that stretch reads MSIKHWMSAPIAVATLFASQLLLAGSVLA. Positions 38–57 are disordered; the sequence is PRNDAFEQKHPDQYHSWKAT. His92 provides a ligand contact to heme c. Residues Cys120, Cys123, and Lys124 each contribute to the heme site. Cys158, Cys161, His162, Cys207, Cys210, and His211 together coordinate heme c. 4 residues coordinate Ca(2+): Glu213, Tyr214, Lys259, and Gln261. Residue Tyr214 coordinates substrate. Substrate is bound at residue His262. Heme c-binding residues include His273, Cys280, Cys283, His284, His299, Cys312, Cys315, His316, and His391.

This sequence belongs to the cytochrome c-552 family. Ca(2+) serves as cofactor. It depends on heme c as a cofactor.

It localises to the periplasm. The catalysed reaction is 6 Fe(III)-[cytochrome c] + NH4(+) + 2 H2O = 6 Fe(II)-[cytochrome c] + nitrite + 8 H(+). The protein operates within nitrogen metabolism; nitrate reduction (assimilation). Its function is as follows. Catalyzes the reduction of nitrite to ammonia, consuming six electrons in the process. The polypeptide is Cytochrome c-552 (Vibrio parahaemolyticus serotype O3:K6 (strain RIMD 2210633)).